We begin with the raw amino-acid sequence, 478 residues long: Protein nucleotidyltransferase YdiU (478 aa).

Gly-84, Gly-86, Arg-87, Lys-107, Asp-119, Gly-120, Arg-170, and Arg-177 together coordinate ATP. Asp-246 acts as the Proton acceptor in catalysis. Mg(2+)-binding residues include Asn-247 and Asp-256. Position 256 (Asp-256) interacts with ATP.

This sequence belongs to the SELO family. Mg(2+) serves as cofactor. Requires Mn(2+) as cofactor.

It catalyses the reaction L-seryl-[protein] + ATP = 3-O-(5'-adenylyl)-L-seryl-[protein] + diphosphate. It carries out the reaction L-threonyl-[protein] + ATP = 3-O-(5'-adenylyl)-L-threonyl-[protein] + diphosphate. The catalysed reaction is L-tyrosyl-[protein] + ATP = O-(5'-adenylyl)-L-tyrosyl-[protein] + diphosphate. The enzyme catalyses L-histidyl-[protein] + UTP = N(tele)-(5'-uridylyl)-L-histidyl-[protein] + diphosphate. It catalyses the reaction L-seryl-[protein] + UTP = O-(5'-uridylyl)-L-seryl-[protein] + diphosphate. It carries out the reaction L-tyrosyl-[protein] + UTP = O-(5'-uridylyl)-L-tyrosyl-[protein] + diphosphate. Its function is as follows. Nucleotidyltransferase involved in the post-translational modification of proteins. It can catalyze the addition of adenosine monophosphate (AMP) or uridine monophosphate (UMP) to a protein, resulting in modifications known as AMPylation and UMPylation. In Escherichia coli O9:H4 (strain HS), this protein is Protein nucleotidyltransferase YdiU.